Consider the following 208-residue polypeptide: FMN-dependent NADH:quinone oxidoreductase 4 (208 aa).

Belongs to the azoreductase type 1 family. As to quaternary structure, homodimer. The cofactor is FMN.

It catalyses the reaction 2 a quinone + NADH + H(+) = 2 a 1,4-benzosemiquinone + NAD(+). The enzyme catalyses N,N-dimethyl-1,4-phenylenediamine + anthranilate + 2 NAD(+) = 2-(4-dimethylaminophenyl)diazenylbenzoate + 2 NADH + 2 H(+). Functionally, quinone reductase that provides resistance to thiol-specific stress caused by electrophilic quinones. Its function is as follows. Also exhibits azoreductase activity. Catalyzes the reductive cleavage of the azo bond in aromatic azo compounds to the corresponding amines. In Bacillus anthracis, this protein is FMN-dependent NADH:quinone oxidoreductase 4.